We begin with the raw amino-acid sequence, 425 residues long: bZIP transcription factor RISBZ2 (425 aa).

2 disordered regions span residues 1 to 50 and 169 to 257; these read MERV…GGGG and NSIG…AAHL. Over residues 30–50 the composition is skewed to gly residues; it reads QGGGGVASGGGGGVAGGGGGG. Residues 171-182 are compositionally biased toward polar residues; that stretch reads IGGNATPVQNML. The span at 213–222 shows a compositional bias: acidic residues; that stretch reads SDDDDMEGEA. Basic and acidic residues predominate over residues 231 to 247; the sequence is ADQRLQRRKQSNRESAR. Residues 232–295 form the bZIP domain; sequence DQRLQRRKQS…NDAAVDNRVL (64 aa). The interval 234-253 is basic motif; sequence RLQRRKQSNRESARRSRSRK. A leucine-zipper region spans residues 260–274; it reads LEAQVSQLRVENSSL. A disordered region spans residues 334–354; sequence MPFNSSPSEATSDAAVPIQDD.

In terms of assembly, heterodimer with RISBZ1/BZIP58.

Its subcellular location is the nucleus. Transcriptional activator that binds to the DNA specific sequence 5'-GCCACGT[AC]AG-3' found in the alpha-globulin gene promoter. Does not bind to promoters of other major storage genes such as glutelin, prolamin and albumin. Binds to the DNA specific sequence 5'-TGAGTCA-3' found in seed storage protein gene promoters. In Oryza sativa subsp. japonica (Rice), this protein is bZIP transcription factor RISBZ2.